The following is a 563-amino-acid chain: Arginine--tRNA ligase (563 aa).

The short motif at 121 to 131 (PNIAKPFSIGH) is the 'HIGH' region element.

It belongs to the class-I aminoacyl-tRNA synthetase family. In terms of assembly, monomer.

The protein localises to the cytoplasm. The enzyme catalyses tRNA(Arg) + L-arginine + ATP = L-arginyl-tRNA(Arg) + AMP + diphosphate. The polypeptide is Arginine--tRNA ligase (Streptococcus pyogenes serotype M6 (strain ATCC BAA-946 / MGAS10394)).